We begin with the raw amino-acid sequence, 460 residues long: Bifunctional protein GlmU (460 aa).

The interval 1 to 229 is pyrophosphorylase; sequence MSHYAIILAA…FEESLGVNDR (229 aa). UDP-N-acetyl-alpha-D-glucosamine contacts are provided by residues 8-11, K22, Q72, and 77-78; these read LAAG and GT. D102 is a binding site for Mg(2+). Residues G139, E154, N169, and N227 each coordinate UDP-N-acetyl-alpha-D-glucosamine. N227 is a binding site for Mg(2+). The tract at residues 230 to 250 is linker; the sequence is VALATAEDVMRRRINKAHMIN. An N-acetyltransferase region spans residues 251–460; sequence GVTFQNPNAT…KKPHHPSQQK (210 aa). 2 residues coordinate UDP-N-acetyl-alpha-D-glucosamine: R332 and K350. The active-site Proton acceptor is the H362. 2 residues coordinate UDP-N-acetyl-alpha-D-glucosamine: Y365 and N376. Acetyl-CoA-binding positions include A379, 385–386, S404, A422, and R439; that span reads NY.

The protein in the N-terminal section; belongs to the N-acetylglucosamine-1-phosphate uridyltransferase family. This sequence in the C-terminal section; belongs to the transferase hexapeptide repeat family. As to quaternary structure, homotrimer. Mg(2+) serves as cofactor.

It localises to the cytoplasm. It carries out the reaction alpha-D-glucosamine 1-phosphate + acetyl-CoA = N-acetyl-alpha-D-glucosamine 1-phosphate + CoA + H(+). The catalysed reaction is N-acetyl-alpha-D-glucosamine 1-phosphate + UTP + H(+) = UDP-N-acetyl-alpha-D-glucosamine + diphosphate. It functions in the pathway nucleotide-sugar biosynthesis; UDP-N-acetyl-alpha-D-glucosamine biosynthesis; N-acetyl-alpha-D-glucosamine 1-phosphate from alpha-D-glucosamine 6-phosphate (route II): step 2/2. The protein operates within nucleotide-sugar biosynthesis; UDP-N-acetyl-alpha-D-glucosamine biosynthesis; UDP-N-acetyl-alpha-D-glucosamine from N-acetyl-alpha-D-glucosamine 1-phosphate: step 1/1. Its pathway is bacterial outer membrane biogenesis; LPS lipid A biosynthesis. In terms of biological role, catalyzes the last two sequential reactions in the de novo biosynthetic pathway for UDP-N-acetylglucosamine (UDP-GlcNAc). The C-terminal domain catalyzes the transfer of acetyl group from acetyl coenzyme A to glucosamine-1-phosphate (GlcN-1-P) to produce N-acetylglucosamine-1-phosphate (GlcNAc-1-P), which is converted into UDP-GlcNAc by the transfer of uridine 5-monophosphate (from uridine 5-triphosphate), a reaction catalyzed by the N-terminal domain. The polypeptide is Bifunctional protein GlmU (Streptococcus thermophilus (strain CNRZ 1066)).